Reading from the N-terminus, the 232-residue chain is Putative N-acetylmannosamine-6-phosphate 2-epimerase (232 aa).

The protein belongs to the NanE family.

The catalysed reaction is an N-acyl-D-glucosamine 6-phosphate = an N-acyl-D-mannosamine 6-phosphate. The protein operates within amino-sugar metabolism; N-acetylneuraminate degradation; D-fructose 6-phosphate from N-acetylneuraminate: step 3/5. Functionally, converts N-acetylmannosamine-6-phosphate (ManNAc-6-P) to N-acetylglucosamine-6-phosphate (GlcNAc-6-P). This chain is Putative N-acetylmannosamine-6-phosphate 2-epimerase, found in Proteus mirabilis (strain HI4320).